A 513-amino-acid polypeptide reads, in one-letter code: Carotenoid isomerooxygenase (513 aa).

Fe cation is bound by residues His-184, His-242, His-312, and His-503.

Belongs to the carotenoid oxygenase family. The cofactor is Fe(2+).

It carries out the reaction all-trans-zeaxanthin + O2 = (3R)-11-cis-3-hydroxyretinal + (3R)-all-trans-3-hydroxyretinal. The protein operates within cofactor metabolism; retinol metabolism. Catalyzes the oxidative cleavage at the 15,15'-double bond of carotenoids and the simultaneous all-trans to 11-cis isomerization of one cleavage product. Carotenoids like 11-cis retinal can promote visual pigment biogenesis in the dark. Essential for the biosynthesis of the 3-hydroxyretinal chromophore of rhodopsin from zeaxanthin and for proper photoreceptor development. The protein is Carotenoid isomerooxygenase (ninaB) of Galleria mellonella (Greater wax moth).